We begin with the raw amino-acid sequence, 715 residues long: Polyribonucleotide nucleotidyltransferase (715 aa).

Residues aspartate 493 and aspartate 499 each coordinate Mg(2+). Positions 560-619 (PRMITVKINPEKIRDVIGKGGSVIRALTEETGTTIDISDDGVVTIASTSSEGMAEAKKRI) constitute a KH domain. The S1 motif domain occupies 629–697 (GQVYEGTVLK…EKGRVRLSAK (69 aa)).

This sequence belongs to the polyribonucleotide nucleotidyltransferase family. Requires Mg(2+) as cofactor.

It localises to the cytoplasm. The catalysed reaction is RNA(n+1) + phosphate = RNA(n) + a ribonucleoside 5'-diphosphate. In terms of biological role, involved in mRNA degradation. Catalyzes the phosphorolysis of single-stranded polyribonucleotides processively in the 3'- to 5'-direction. The protein is Polyribonucleotide nucleotidyltransferase of Burkholderia orbicola (strain MC0-3).